Consider the following 403-residue polypeptide: Protein STRICTOSIDINE SYNTHASE-LIKE 13 (403 aa).

Positions 1–42 (MEKKGQHGTYESMMTHHPILCIIALSVLFIAIDPFHMSPIGG) are cleaved as a signal peptide. N-linked (GlcNAc...) asparagine glycans are attached at residues Asn-66 and Asn-206.

Belongs to the strictosidine synthase family.

Its subcellular location is the vacuole. In terms of biological role, required for the exine formation during pollen development. This chain is Protein STRICTOSIDINE SYNTHASE-LIKE 13, found in Arabidopsis thaliana (Mouse-ear cress).